Here is a 1519-residue protein sequence, read N- to C-terminus: Rho guanine nucleotide exchange factor 40 (1519 aa).

Disordered regions lie at residues 194–237 (VGHQ…PVEG) and 253–503 (RGSP…LETV). Residues 200–218 (TLPPELPSGPPGLPSPPLP) show a composition bias toward pro residues. Phosphoserine is present on S262. Positions 280 to 290 (KGRHRRHRAWM) are enriched in basic residues. The span at 314 to 341 (ASPESPPGAEAVPEAAVLEVSEPPAEAV) shows a compositional bias: low complexity. Residues 355–367 (LRGGGGGGQGAEG) show a composition bias toward gly residues. T371 is subject to Phosphothreonine. A compositionally biased stretch (basic residues) spans 374 to 386 (RTGKGNRRKKRAA). S419 carries the phosphoserine modification. Positions 421 to 457 (SEHKLPECHLVKEEYEGSGKPESEPKELKTAGEKEPQ) are enriched in basic and acidic residues. Positions 828 to 871 (SAEVQERLAQAREALALEENATSQKVLDIFEQRLEQVESGLHRA) form a coiled coil. 2 positions are modified to phosphoserine: S931 and S961. A coiled-coil region spans residues 934–961 (ALREWGRCQARCQELERRIQQHVGEEAS). Positions 955 to 1031 (HVGEEASPRG…ELAPEAEGRP (77 aa)) are disordered. The segment covering 980-996 (WGPRSPSPSLSSLLLPS) has biased composition (low complexity). Position 1082 is a phosphoserine (S1082). Residues 1085–1253 (AQQRLVSELI…REQEARGRDL (169 aa)) enclose the DH domain. In terms of domain architecture, PH spans 1265–1372 (DLKEQGQLLH…WTSSIAQLLW (108 aa)). Phosphoserine is present on residues S1433, S1438, and S1474. A disordered region spans residues 1466-1519 (TLDSSGDVSPGPRNSPSLQPPHPGSSTPTLASRGILGLSRQSHARALSDPTTPL). Positions 1467–1482 (LDSSGDVSPGPRNSPS) are enriched in polar residues. The residue at position 1492 (T1492) is a Phosphothreonine.

In terms of tissue distribution, expressed at higher level in the central nervous system and skeletal muscle and greater abundance in fetal than adult brain (at protein level).

It localises to the cytoplasm. May act as a guanine nucleotide exchange factor (GEF). The protein is Rho guanine nucleotide exchange factor 40 (ARHGEF40) of Homo sapiens (Human).